The chain runs to 233 residues: Cell surface glycoprotein gp42 (233 aa).

Positions 1–16 (MLLWMVLLLCVSMTEA) are cleaved as a signal peptide. 2 Ig-like domains span residues 23–98 (PVLS…GTIQ) and 115–195 (PVLT…RDIS). N-linked (GlcNAc...) asparagine glycans are attached at residues N29, N66, and N181. 2 cysteine pairs are disulfide-bonded: C40–C88 and C136–C184. G206 carries the GPI-anchor amidated glycine lipid modification. The propeptide at 207-233 (TASMKSTTVVIWLPVSCLVGWPWLLRF) is removed in mature form.

As to expression, NK cells.

The protein resides in the cell membrane. The polypeptide is Cell surface glycoprotein gp42 (Rattus norvegicus (Rat)).